The chain runs to 411 residues: UPF0754 membrane protein Npun_R4433 (411 aa).

Helical transmembrane passes span 3–23 and 387–407; these read WSHLWLYVSPPVLGGIIGYFT and IVTLGGVLGFVIGLLQTVFLV.

This sequence belongs to the UPF0754 family.

It is found in the cell inner membrane. This is UPF0754 membrane protein Npun_R4433 from Nostoc punctiforme (strain ATCC 29133 / PCC 73102).